We begin with the raw amino-acid sequence, 626 residues long: SHC-transforming protein 4 (626 aa).

The interval 1–185 (MRERSQDSQA…KQDGPPLQHL (185 aa)) is CH2. Disordered stretches follow at residues 38-76 (ITSL…TVSS) and 119-182 (LQEN…GPPL). The span at 120 to 139 (QENQDQTPSRPASPESNLNR) shows a compositional bias: polar residues. Positions 186–369 (LGNGLNYCVR…LVDGAPEDRD (184 aa)) constitute a PID domain. Residues 370-521 (HDYYNSIPGK…HIRQQLWDEE (152 aa)) are CH1. Residue tyrosine 422 is modified to Phosphotyrosine. An SH2 domain is found at 522–613 (CFHGKLSRGA…GSEVRLKQPI (92 aa)).

Interacts (via PID domain) with phosphorylated MUSK (via NPXY motif); undergoes tyrosine phosphorylation downstream of activated MUSK. Interacts with GRB2; the interaction is dependent of Tyr-422 phosphorylation and increased by EGF. Phosphorylated; the phosphorylation is enhanced by EGF. Phosphorylation at Tyr-422 is required for the interaction with GRB2. In terms of tissue distribution, expressed in both brain and skeletal muscle; widely expressed in brain namely olfactory bulb, cortex, hippocampus, striatum, thalamus, and brain stem (at protein level). Only expressed in melanomas. Weakly expressed in normal melanocytes and benign nevi. Highly expressed at the transition from radial growth phase to vertical growth phase and metastatic melanomas, when tumor cells acquire migratory competence and invasive potential.

Its subcellular location is the postsynaptic cell membrane. In terms of biological role, activates both Ras-dependent and Ras-independent migratory pathways in melanomas. Contributes to the early phases of agrin-induced tyrosine phosphorylation of CHRNB1. The chain is SHC-transforming protein 4 (Shc4) from Mus musculus (Mouse).